A 417-amino-acid polypeptide reads, in one-letter code: Sterile alpha motif domain-containing protein 14 (417 aa).

Disordered regions lie at residues 37-299 (LLAK…WQEA) and 388-417 (AAAE…AKKS). Residues 40–49 (KGRRHRPSRS) show a composition bias toward basic residues. 2 positions are modified to phosphoserine: S84 and S108. Over residues 135–153 (AAASCSPPRSAPSSDSSPS) the composition is skewed to low complexity. Residues 160 to 173 (RAEPHSEDDSRDAS) show a composition bias toward basic and acidic residues. A phosphoserine mark is found at S173 and S179. Low complexity-rich tracts occupy residues 244 to 260 (SGKG…PTCS) and 276 to 295 (STLS…PSGP). Position 279 is a phosphoserine (S279). T283 is subject to Phosphothreonine. The SAM domain maps to 326 to 389 (WTSQQVGQWL…KRKLKEMAAA (64 aa)). Residues 377–417 (ALVKRKLKEMAAAAEKERKAQEKAARQREKLRRREQEAKKS) adopt a coiled-coil conformation. The span at 390 to 417 (AEKERKAQEKAARQREKLRRREQEAKKS) shows a compositional bias: basic and acidic residues.

The polypeptide is Sterile alpha motif domain-containing protein 14 (SAMD14) (Homo sapiens (Human)).